Consider the following 297-residue polypeptide: Acetyl-coenzyme A carboxylase carboxyl transferase subunit beta (297 aa).

The region spanning 27–296 (LWHKCPSCEA…PVETSQVTAK (270 aa)) is the CoA carboxyltransferase N-terminal domain. Zn(2+)-binding residues include cysteine 31, cysteine 34, cysteine 50, and cysteine 53. The C4-type zinc-finger motif lies at 31-53 (CPSCEAVLYRPELEKTLDVCPKC).

The protein belongs to the AccD/PCCB family. Acetyl-CoA carboxylase is a heterohexamer composed of biotin carboxyl carrier protein (AccB), biotin carboxylase (AccC) and two subunits each of ACCase subunit alpha (AccA) and ACCase subunit beta (AccD). Requires Zn(2+) as cofactor.

It localises to the cytoplasm. The enzyme catalyses N(6)-carboxybiotinyl-L-lysyl-[protein] + acetyl-CoA = N(6)-biotinyl-L-lysyl-[protein] + malonyl-CoA. Its pathway is lipid metabolism; malonyl-CoA biosynthesis; malonyl-CoA from acetyl-CoA: step 1/1. Its function is as follows. Component of the acetyl coenzyme A carboxylase (ACC) complex. Biotin carboxylase (BC) catalyzes the carboxylation of biotin on its carrier protein (BCCP) and then the CO(2) group is transferred by the transcarboxylase to acetyl-CoA to form malonyl-CoA. In Stutzerimonas stutzeri (strain A1501) (Pseudomonas stutzeri), this protein is Acetyl-coenzyme A carboxylase carboxyl transferase subunit beta.